A 583-amino-acid chain; its full sequence is ATP-dependent lipid A-core flippase (583 aa).

Helical transmembrane passes span 32-52, 71-91, 115-135, 160-180, 259-279, and 286-306; these read VAFL…TGFL, LHLL…AGFI, LMSL…TSKL, ILGM…IFAV, SMVV…YAVG, and FAAF…LTSL. Residues 34 to 312 enclose the ABC transmembrane type-1 domain; that stretch reads FLISIIALVT…LTSLNEELQV (279 aa). Positions 344 to 580 constitute an ABC transporter domain; it reads IVFENVTLQY…DGHYAKLYRK (237 aa). Residue 378 to 385 coordinates ATP; the sequence is GRSGGGKT.

The protein belongs to the ABC transporter superfamily. Lipid exporter (TC 3.A.1.106) family. In terms of assembly, homodimer.

Its subcellular location is the cell inner membrane. It carries out the reaction ATP + H2O + lipid A-core oligosaccharideSide 1 = ADP + phosphate + lipid A-core oligosaccharideSide 2.. Functionally, involved in lipopolysaccharide (LPS) biosynthesis. Translocates lipid A-core from the inner to the outer leaflet of the inner membrane. Transmembrane domains (TMD) form a pore in the inner membrane and the ATP-binding domain (NBD) is responsible for energy generation. The polypeptide is ATP-dependent lipid A-core flippase (Methylobacillus flagellatus (strain ATCC 51484 / DSM 6875 / VKM B-1610 / KT)).